Here is a 390-residue protein sequence, read N- to C-terminus: Lipid-A-disaccharide synthase (390 aa).

It belongs to the LpxB family.

It catalyses the reaction a lipid X + a UDP-2-N,3-O-bis[(3R)-3-hydroxyacyl]-alpha-D-glucosamine = a lipid A disaccharide + UDP + H(+). It functions in the pathway bacterial outer membrane biogenesis; LPS lipid A biosynthesis. Condensation of UDP-2,3-diacylglucosamine and 2,3-diacylglucosamine-1-phosphate to form lipid A disaccharide, a precursor of lipid A, a phosphorylated glycolipid that anchors the lipopolysaccharide to the outer membrane of the cell. This Neisseria gonorrhoeae (strain ATCC 700825 / FA 1090) protein is Lipid-A-disaccharide synthase.